The primary structure comprises 20 residues: Poneritoxin (20 aa).

A Methionine sulfoxide; in form U1-PONTX-Dq3c modification is found at Met-18. Lys-19 is modified (lysine amide; in form U1-PONTX-Dq3a and U1-PONTX-Dq3c).

In terms of processing, the peptide spanning residues 2 to 19 occurs in 3 forms and has been given 3 different names. U1-PONTX-Dq3a has an amidated Lys-19, U1-PONTX-Dq3c has an amidated Lys-19 and an oxidized Met-18, and U1-PONTX-Dq3b has no modifications at either Met-18 or Lys-19. As to expression, expressed by the venom gland.

The protein resides in the secreted. Its function is as follows. May have antimicrobial properties, like most ant linear peptides. The protein is Poneritoxin of Dinoponera quadriceps (South American ant).